Consider the following 357-residue polypeptide: Glutamine synthetase cytosolic isozyme (357 aa).

The GS beta-grasp domain occupies 20 to 100 (VIAEYIWIGG…VICDAYSPNG (81 aa)). Residues 107-357 (KRAAAAKIFN…IAETTILWKP (251 aa)) form the GS catalytic domain.

The protein belongs to the glutamine synthetase family. Homooctamer.

It is found in the cytoplasm. It carries out the reaction L-glutamate + NH4(+) + ATP = L-glutamine + ADP + phosphate + H(+). The sequence is that of Glutamine synthetase cytosolic isozyme from Pinus sylvestris (Scotch pine).